The sequence spans 166 residues: Interferon gamma-related (166 aa).

The first 26 residues, 1-26 (MYCRLNMVYLICALLLIVSLQGTVGA), serve as a signal peptide directing secretion. Asn91 is a glycosylation site (N-linked (GlcNAc...) asparagine).

This sequence belongs to the type II (or gamma) interferon family. Homodimer. In terms of tissue distribution, strongly expressed in spleen. Also detected at lower levels in gill, kidney, heart, brain and intestine. In immune cell populations, expressed at highest levels in peripheral blood leukocytes and at lower levels in splenocytes, granulocytes, monocytes and macrophages.

The protein resides in the secreted. Cytokine which binds to interferon gamma receptor 1 (ifngr1). Has activating effects on primary macrophages. Induces nitric oxide production and phagocytic responses in macrophages. Primes monocytes for production of reactive oxygen intermediates (ROI), although the effect is short-lived. Also has inhibitory effects on monocyte priming by ifng1 (interferon gamma 1) and tnfb (TNF-alpha 2). Stimulates phosphorylation of the JAK/STAT signal transducer stat1, but fails to induce stat1 nuclear localization. Promotes increased expression of a number of genes important for macrophage activity, including the interferon regulatory factors irf2 and irf9. This Carassius auratus (Goldfish) protein is Interferon gamma-related.